The chain runs to 487 residues: Probable glutamate receptor (487 aa).

The first 23 residues, 1–23 (MDKGLHFIFCVVTAVLLLRESSQ), serve as a signal peptide directing secretion. Topologically, residues 24-169 (TGAMRNDDAM…FFHFLAPFSK (146 aa)) are extracellular. A glycan (N-linked (GlcNAc...) asparagine) is linked at Asn-104. A helical transmembrane segment spans residues 170–190 (ETWTGLLFAYVLTCVCLFLVA). Residues 191 to 235 (RLSPCEWNEPKNEENHFTFLNSLWFGAGALTLQGVTPRPKAFSVR) are Cytoplasmic-facing. The chain crosses the membrane as a helical span at residues 236–256 (VIAAIWWLFTIALLAAYIANF). At 257–419 (TALLSSGSEQ…EGWSPLQPQA (163 aa)) the chain is on the extracellular side. A helical transmembrane segment spans residues 420-440 (LGGLFLTLAIGLALGVIAAMV). At 441 to 487 (ELSNKSRHAAGHIKKSCCSIFTEEMCTRLRIKENTRQTQETSGRANA) the chain is on the cytoplasmic side.

This sequence belongs to the glutamate-gated ion channel (TC 1.A.10.1) family.

It is found in the cell membrane. It localises to the postsynaptic cell membrane. In terms of biological role, receptor for glutamate. L-glutamate acts as an excitatory neurotransmitter at many synapses in the central nervous system. The postsynaptic actions of Glu are mediated by a variety of receptors that are named according to their selective agonists. This Gallus gallus (Chicken) protein is Probable glutamate receptor (KBP).